The sequence spans 340 residues: Protein RecA (340 aa).

65–72 (GPESGGKT) provides a ligand contact to ATP.

Belongs to the RecA family.

The protein localises to the cytoplasm. In terms of biological role, can catalyze the hydrolysis of ATP in the presence of single-stranded DNA, the ATP-dependent uptake of single-stranded DNA by duplex DNA, and the ATP-dependent hybridization of homologous single-stranded DNAs. It interacts with LexA causing its activation and leading to its autocatalytic cleavage. The protein is Protein RecA of Thermus aquaticus.